A 286-amino-acid chain; its full sequence is Phosphate import ATP-binding protein PstB (286 aa).

The region spanning 40–281 (VVAKDFSIFY…PRDRMTEDYI (242 aa)) is the ABC transporter domain. 72–79 (GPSGCGKS) provides a ligand contact to ATP.

This sequence belongs to the ABC transporter superfamily. Phosphate importer (TC 3.A.1.7) family. As to quaternary structure, the complex is composed of two ATP-binding proteins (PstB), two transmembrane proteins (PstC and PstA) and a solute-binding protein (PstS).

It is found in the cell inner membrane. The enzyme catalyses phosphate(out) + ATP + H2O = ADP + 2 phosphate(in) + H(+). Functionally, part of the ABC transporter complex PstSACB involved in phosphate import. Responsible for energy coupling to the transport system. The sequence is that of Phosphate import ATP-binding protein PstB from Chlorobium luteolum (strain DSM 273 / BCRC 81028 / 2530) (Pelodictyon luteolum).